Consider the following 170-residue polypeptide: N-alpha-acetyltransferase 50 (170 aa).

One can recognise an N-acetyltransferase domain in the interval 6–155; it reads IELGDVTPHN…DAHVLQKNLK (150 aa). Tyr-31 provides a ligand contact to substrate. Tyr-73 is a catalytic residue. Residue Met-75 participates in substrate binding. 77–90 lines the acetyl-CoA pocket; it reads LGCLAPYRRLGIGT. 79-90 is a CoA binding site; it reads CLAPYRRLGIGT. Residue His-112 is part of the active site. 117–126 lines the CoA pocket; it reads NESAIDFYRK. The tract at residues 138 to 141 is substrate; that stretch reads YYKR.

The protein belongs to the acetyltransferase family. GNAT subfamily.

It is found in the cytoplasm. The protein localises to the nucleus. It carries out the reaction N-terminal L-methionyl-L-alanyl-[protein] + acetyl-CoA = N-terminal N(alpha)-acetyl-L-methionyl-L-alanyl-[protein] + CoA + H(+). The catalysed reaction is N-terminal L-methionyl-L-seryl-[protein] + acetyl-CoA = N-terminal N(alpha)-acetyl-L-methionyl-L-seryl-[protein] + CoA + H(+). It catalyses the reaction N-terminal L-methionyl-L-valyl-[protein] + acetyl-CoA = N-terminal N(alpha)-acetyl-L-methionyl-L-valyl-[protein] + CoA + H(+). The enzyme catalyses N-terminal L-methionyl-L-threonyl-[protein] + acetyl-CoA = N-terminal N(alpha)-acetyl-L-methionyl-L-threonyl-[protein] + CoA + H(+). It carries out the reaction N-terminal L-methionyl-L-lysyl-[protein] + acetyl-CoA = N-terminal N(alpha)-acetyl-L-methionyl-L-lysyl-[protein] + CoA + H(+). The catalysed reaction is N-terminal L-methionyl-L-leucyl-[protein] + acetyl-CoA = N-terminal N(alpha)-acetyl-L-methionyl-L-leucyl-[protein] + CoA + H(+). It catalyses the reaction N-terminal L-methionyl-L-phenylalanyl-[protein] + acetyl-CoA = N-terminal N(alpha)-acetyl-L-methionyl-L-phenylalanyl-[protein] + CoA + H(+). The enzyme catalyses N-terminal L-methionyl-L-tyrosyl-[protein] + acetyl-CoA = N-terminal N(alpha)-acetyl-L-methionyl-L-tyrosyl-[protein] + CoA + H(+). Its function is as follows. N-alpha-acetyltransferase that acetylates the N-terminus of proteins that retain their initiating methionine. Has a broad substrate specificity: able to acetylate the initiator methionine of most peptides, except for those with a proline in second position. Also displays N-epsilon-acetyltransferase activity by mediating acetylation of the side chain of specific lysines on proteins. The relevance of N-epsilon-acetyltransferase activity is however unclear. Required for sister chromatid cohesion during mitosis by promoting binding of CDCA5/sororin to cohesin. The polypeptide is N-alpha-acetyltransferase 50 (naa50) (Xenopus laevis (African clawed frog)).